The following is a 451-amino-acid chain: Phosphoglucosamine mutase (451 aa).

Serine 103 (phosphoserine intermediate) is an active-site residue. Mg(2+) contacts are provided by serine 103, aspartate 243, aspartate 245, and aspartate 247. Serine 103 carries the post-translational modification Phosphoserine.

It belongs to the phosphohexose mutase family. It depends on Mg(2+) as a cofactor. Post-translationally, activated by phosphorylation.

It catalyses the reaction alpha-D-glucosamine 1-phosphate = D-glucosamine 6-phosphate. Its function is as follows. Catalyzes the conversion of glucosamine-6-phosphate to glucosamine-1-phosphate. In Lactobacillus johnsonii (strain CNCM I-12250 / La1 / NCC 533), this protein is Phosphoglucosamine mutase.